The primary structure comprises 349 residues: tRNA (guanine(26)-N(2))-dimethyltransferase (349 aa).

The region spanning 1-343 (MEVEEGRARV…ADRDVVVKIL (343 aa)) is the Trm1 methyltransferase domain. Residues Arg25, Arg50, Asp66, Asp92, and Ala93 each contribute to the S-adenosyl-L-methionine site.

This sequence belongs to the class I-like SAM-binding methyltransferase superfamily. Trm1 family.

It catalyses the reaction guanosine(26) in tRNA + 2 S-adenosyl-L-methionine = N(2)-dimethylguanosine(26) in tRNA + 2 S-adenosyl-L-homocysteine + 2 H(+). Its function is as follows. Dimethylates a single guanine residue at position 26 of a number of tRNAs using S-adenosyl-L-methionine as donor of the methyl groups. This chain is tRNA (guanine(26)-N(2))-dimethyltransferase, found in Archaeoglobus fulgidus (strain ATCC 49558 / DSM 4304 / JCM 9628 / NBRC 100126 / VC-16).